The following is a 360-amino-acid chain: Decorin (360 aa).

Positions 1–16 are cleaved as a signal peptide; the sequence is MKATIIFLLLAQVSWA. The propeptide occupies 17–30; the sequence is GPFQQRGLFDFMLE. A glycan (O-linked (Xyl...) (glycosaminoglycan) serine) is linked at Ser-34. 2 cysteine pairs are disulfide-bonded: Cys-55–Cys-61 and Cys-59–Cys-68. LRR repeat units lie at residues 74 to 94, 95 to 118, 119 to 142, 143 to 163, 164 to 187, 188 to 213, 214 to 234, 235 to 258, 259 to 282, 283 to 305, 306 to 335, and 336 to 360; these read DKVP…NNKI, TEIK…NNKI, SKIS…KNHL, KELP…ENEI, TKVR…TNPL, KSSG…DTNI, TTIP…GNKI, TKVD…FNSI, SAVD…NNKL, IKVP…NNNI, SAVG…SNPV, and QYWE…GNYK. A glycan (N-linked (GlcNAc...) asparagine) is linked at Asn-212. N-linked (GlcNAc...) asparagine glycosylation is found at Asn-263 and Asn-304. The cysteines at positions 314 and 347 are disulfide-linked.

It belongs to the small leucine-rich proteoglycan (SLRP) family. SLRP class I subfamily. In terms of assembly, binds to type I and type II collagen, fibronectin and TGF-beta. Forms a ternary complex with MFAP2 and ELN. Interacts with DPT. Post-translationally, the attached glycosaminoglycan chain can be either chondroitin sulfate or dermatan sulfate depending upon the tissue of origin.

It is found in the secreted. Its subcellular location is the extracellular space. It localises to the extracellular matrix. Functionally, may affect the rate of fibrils formation. The polypeptide is Decorin (DCN) (Equus caballus (Horse)).